A 394-amino-acid chain; its full sequence is uncharacterized protein (394 aa).

Helical transmembrane passes span 13–33, 35–55, 73–95, 110–130, 152–172, 179–198, 216–236, 241–261, 267–287, 293–313, 340–360, and 372–392; these read LITT…TTMI, MAPT…VLPT, TTMT…TLTV, ALTV…HMVL, IHMV…PTVL, LMVL…TLTV, VLLA…TVLP, VLMV…HMVL, VLMV…PTVL, VLMV…TLTV, MMTL…VTTI, and ILLC…YVSA.

It is found in the membrane. This is an uncharacterized protein from Saccharomyces cerevisiae (strain ATCC 204508 / S288c) (Baker's yeast).